The following is a 167-amino-acid chain: uncharacterized protein (167 aa).

It is found in the mitochondrion. This is an uncharacterized protein from Marchantia polymorpha (Common liverwort).